Here is a 490-residue protein sequence, read N- to C-terminus: Pyridine nucleotide-disulfide oxidoreductase domain-containing protein 1 (490 aa).

This sequence belongs to the class-I pyridine nucleotide-disulfide oxidoreductase family. PYROXD1 subfamily. FAD is required as a cofactor.

The protein localises to the nucleus. It is found in the cytoplasm. Its subcellular location is the myofibril. The protein resides in the sarcomere. Functionally, probable FAD-dependent oxidoreductase; involved in the cellular oxidative stress response. Required for normal sarcomere structure and muscle fiber integrity. The polypeptide is Pyridine nucleotide-disulfide oxidoreductase domain-containing protein 1 (pyroxd1) (Danio rerio (Zebrafish)).